The following is a 506-amino-acid chain: 2-isopropylmalate synthase (506 aa).

In terms of domain architecture, Pyruvate carboxyltransferase spans 4-266 (ILFMDTTLRD…EPSMTLKEIK (263 aa)). Asp-13, His-201, His-203, and Asn-237 together coordinate Mn(2+). The tract at residues 390 to 506 (NITQLQVHFV…KLKSFIQLVK (117 aa)) is regulatory domain.

The protein belongs to the alpha-IPM synthase/homocitrate synthase family. LeuA type 1 subfamily. In terms of assembly, homodimer. The cofactor is Mn(2+).

It localises to the cytoplasm. The enzyme catalyses 3-methyl-2-oxobutanoate + acetyl-CoA + H2O = (2S)-2-isopropylmalate + CoA + H(+). Its pathway is amino-acid biosynthesis; L-leucine biosynthesis; L-leucine from 3-methyl-2-oxobutanoate: step 1/4. Catalyzes the condensation of the acetyl group of acetyl-CoA with 3-methyl-2-oxobutanoate (2-ketoisovalerate) to form 3-carboxy-3-hydroxy-4-methylpentanoate (2-isopropylmalate). The protein is 2-isopropylmalate synthase of Bacillus anthracis (strain A0248).